The following is a 117-amino-acid chain: DNA-directed RNA polymerase subunit omega (117 aa).

This sequence belongs to the RNA polymerase subunit omega family. As to quaternary structure, the RNAP catalytic core consists of 2 alpha, 1 beta, 1 beta' and 1 omega subunit. When a sigma factor is associated with the core the holoenzyme is formed, which can initiate transcription.

It catalyses the reaction RNA(n) + a ribonucleoside 5'-triphosphate = RNA(n+1) + diphosphate. Functionally, promotes RNA polymerase assembly. Latches the N- and C-terminal regions of the beta' subunit thereby facilitating its interaction with the beta and alpha subunits. This Jannaschia sp. (strain CCS1) protein is DNA-directed RNA polymerase subunit omega.